The primary structure comprises 337 residues: Ketol-acid reductoisomerase (NADP(+)) (337 aa).

A KARI N-terminal Rossmann domain is found at 3-183 (VEMFYDADAD…GGARAGVIKT (181 aa)). NADP(+) is bound by residues 26-29 (YGSQ), Lys-49, Ser-52, Ser-54, and 84-87 (DTAQ). The active site involves His-109. Gly-135 lines the NADP(+) pocket. The KARI C-terminal knotted domain maps to 184-329 (TFKEETETDL…KKLRDLMSWV (146 aa)). Mg(2+)-binding residues include Asp-192, Glu-196, Glu-228, and Glu-232. Ser-253 is a substrate binding site.

It belongs to the ketol-acid reductoisomerase family. The cofactor is Mg(2+).

It catalyses the reaction (2R)-2,3-dihydroxy-3-methylbutanoate + NADP(+) = (2S)-2-acetolactate + NADPH + H(+). The enzyme catalyses (2R,3R)-2,3-dihydroxy-3-methylpentanoate + NADP(+) = (S)-2-ethyl-2-hydroxy-3-oxobutanoate + NADPH + H(+). It participates in amino-acid biosynthesis; L-isoleucine biosynthesis; L-isoleucine from 2-oxobutanoate: step 2/4. The protein operates within amino-acid biosynthesis; L-valine biosynthesis; L-valine from pyruvate: step 2/4. Its function is as follows. Involved in the biosynthesis of branched-chain amino acids (BCAA). Catalyzes an alkyl-migration followed by a ketol-acid reduction of (S)-2-acetolactate (S2AL) to yield (R)-2,3-dihydroxy-isovalerate. In the isomerase reaction, S2AL is rearranged via a Mg-dependent methyl migration to produce 3-hydroxy-3-methyl-2-ketobutyrate (HMKB). In the reductase reaction, this 2-ketoacid undergoes a metal-dependent reduction by NADPH to yield (R)-2,3-dihydroxy-isovalerate. The polypeptide is Ketol-acid reductoisomerase (NADP(+)) (Mycolicibacterium vanbaalenii (strain DSM 7251 / JCM 13017 / BCRC 16820 / KCTC 9966 / NRRL B-24157 / PYR-1) (Mycobacterium vanbaalenii)).